We begin with the raw amino-acid sequence, 381 residues long: Sulfate adenylyltransferase (381 aa).

This sequence belongs to the sulfate adenylyltransferase family.

The catalysed reaction is sulfate + ATP + H(+) = adenosine 5'-phosphosulfate + diphosphate. It participates in sulfur metabolism; hydrogen sulfide biosynthesis; sulfite from sulfate: step 1/3. This Chloroflexus aurantiacus (strain ATCC 29366 / DSM 635 / J-10-fl) protein is Sulfate adenylyltransferase.